A 340-amino-acid chain; its full sequence is Immunoglobulin-binding protein 1 (340 aa).

Residues 47-61 (LELLEKAAGMLSQLD) enclose the UIM domain. The tract at residues 99-203 (RLDHLQRARE…YLLHLRRWIG (105 aa)) is interaction with PPP2CA. Disordered regions lie at residues 221–242 (DKDSPREESACQSSLPEKPPMK) and 281–340 (LPDR…QNMG). The interval 226 to 291 (REESACQSSL…PDRGIAKPPS (66 aa)) is interaction with MID1. The residue at position 242 (Lys242) is an N6-acetyllysine. Over residues 292 to 301 (ADFQRAAQQQ) the composition is skewed to low complexity. Residues 302–312 (EDQEQKDEENE) are compositionally biased toward acidic residues. Residues 313-330 (EKALHRMREWDDWKDTHP) are compositionally biased toward basic and acidic residues.

This sequence belongs to the IGBP1/TAP42 family. Interacts with partially folded PPP2CA, but not with the fully active protein. Interacts with PPP2CB, and with PP4 and PP6. Interacts with MID1 and MID2. Interacts with ubiquitin. Phosphorylated. In terms of processing, monoubiquitination by MID1 triggers calpain-mediated cleavage and switches IGBP1 activity from protective to destructive.

It is found in the cytoplasm. Its function is as follows. Associated to surface IgM-receptor; may be involved in signal transduction. Involved in regulation of the catalytic activity of the phosphatases PP2A, PP4 and PP6 by protecting their partially folded catalytic subunits from degradative polyubiquitination until they associate with regulatory subunits. This Rattus norvegicus (Rat) protein is Immunoglobulin-binding protein 1 (Igbp1).